Consider the following 579-residue polypeptide: Cyclin-T1-5 (579 aa).

Disordered stretches follow at residues 1–27 (MAGVLAGECSYSESGVSSHSRNSHEKQ) and 271–419 (RVPA…GDAL). The segment covering 11–20 (YSESGVSSHS) has biased composition (polar residues). Low complexity predominate over residues 274–283 (ASQGSEVESS). Residues 306 to 334 (SRQTSSVRSTHEQSNSDNHGGSSKGVLNQ) show a composition bias toward polar residues. 2 stretches are compositionally biased toward basic and acidic residues: residues 349 to 380 (DNKEEIERETKESSLHLESHPAHKDNVREAPH) and 389 to 414 (PGKDNSEREGGELQDDGAVHKSRNVD). Position 423 is a phosphoserine (serine 423). 3 stretches are compositionally biased toward basic and acidic residues: residues 474 to 512 (DEKTKERKVQSRPKAENSDLMGTEHGEILDVKGEVKNTE), 538 to 556 (KQSEGKRRHNSENGEESHK), and 563 to 579 (HHGDREHRRHSQENNHS). Residues 474–579 (DEKTKERKVQ…RRHSQENNHS (106 aa)) form a disordered region.

Belongs to the cyclin family. Cyclin T subfamily.

This chain is Cyclin-T1-5 (CYCT1-5), found in Arabidopsis thaliana (Mouse-ear cress).